Reading from the N-terminus, the 245-residue chain is UPF0246 protein LBUL_1917 (245 aa).

This sequence belongs to the UPF0246 family.

The protein is UPF0246 protein LBUL_1917 of Lactobacillus delbrueckii subsp. bulgaricus (strain ATCC BAA-365 / Lb-18).